Consider the following 1067-residue polypeptide: Sal-like protein 4 (1067 aa).

A disordered region spans residues Met1–Pro62. Low complexity predominate over residues Glu15–Pro42. At Ser53 the chain carries Phosphoserine. A C2H2-type 1; atypical zinc finger spans residues His68–Cys90. Residues Ala115–Lys140 form a disordered region. Over residues Gln119–Gly137 the composition is skewed to polar residues. Residue Lys151 forms a Glycyl lysine isopeptide (Lys-Gly) (interchain with G-Cter in SUMO1); alternate linkage. Lys151 is covalently cross-linked (Glycyl lysine isopeptide (Lys-Gly) (interchain with G-Cter in SUMO2); alternate). Glycyl lysine isopeptide (Lys-Gly) (interchain with G-Cter in SUMO2) cross-links involve residues Lys170, Lys185, and Lys291. Ser308 is subject to Phosphoserine. Residue Lys317 forms a Glycyl lysine isopeptide (Lys-Gly) (interchain with G-Cter in SUMO1); alternate linkage. Residue Lys317 forms a Glycyl lysine isopeptide (Lys-Gly) (interchain with G-Cter in SUMO2); alternate linkage. Lys377 participates in a covalent cross-link: Glycyl lysine isopeptide (Lys-Gly) (interchain with G-Cter in SUMO2). Lys379 participates in a covalent cross-link: Glycyl lysine isopeptide (Lys-Gly) (interchain with G-Cter in SUMO1); alternate. Residue Lys379 forms a Glycyl lysine isopeptide (Lys-Gly) (interchain with G-Cter in SUMO2); alternate linkage. 2 C2H2-type zinc fingers span residues His387–His409 and Tyr415–His437. Lys441 participates in a covalent cross-link: Glycyl lysine isopeptide (Lys-Gly) (interchain with G-Cter in SUMO2). Residues Asp471 to Glu521 are disordered. Lys557 participates in a covalent cross-link: Glycyl lysine isopeptide (Lys-Gly) (interchain with G-Cter in SUMO2). 2 consecutive C2H2-type zinc fingers follow at residues Asn573–His595 and Phe601–His623. Glycyl lysine isopeptide (Lys-Gly) (interchain with G-Cter in SUMO2) cross-links involve residues Lys604 and Lys630. Residues His633–His655 form a C2H2-type 6 zinc finger. Disordered regions lie at residues Glu682–Ser716 and Arg752–Pro835. Residues Asp693–Cys704 are compositionally biased toward acidic residues. Polar residues-rich tracts occupy residues Asp707 to Ser716 and Arg752 to Leu761. 2 positions are modified to phosphoserine: Ser785 and Ser798. The segment covering Ser798–Ser809 has biased composition (polar residues). Over residues Arg810 to Gly829 the composition is skewed to basic and acidic residues. Lys846 is covalently cross-linked (Glycyl lysine isopeptide (Lys-Gly) (interchain with G-Cter in SUMO1); alternate). A Glycyl lysine isopeptide (Lys-Gly) (interchain with G-Cter in SUMO2); alternate cross-link involves residue Lys846. The segment at His880 to His902 adopts a C2H2-type 7 zinc-finger fold. Lys906 is covalently cross-linked (Glycyl lysine isopeptide (Lys-Gly) (interchain with G-Cter in SUMO2)). The segment at Phe908–His930 adopts a C2H2-type 8 zinc-finger fold. Glycyl lysine isopeptide (Lys-Gly) (interchain with G-Cter in SUMO2) cross-links involve residues Lys942 and Lys957. Ser1029 carries the phosphoserine modification.

It belongs to the sal C2H2-type zinc-finger protein family. As to quaternary structure, interacts with POU5F1/OCT4. Interacts with NANOG. Interacts with BEND3. Interacts with NSD2 (via PHD-type zinc fingers 1, 2 and 3). Interacts with NRBP1. Post-translationally, sumoylation with both SUMO1 and SUMO2 regulates the stability, subcellular localization, transcriptional activity, and may reduce interaction with POU5F1/OCT4.

It is found in the cytoplasm. Its subcellular location is the nucleus. Transcription factor with a key role in the maintenance and self-renewal of embryonic and hematopoietic stem cells. The protein is Sal-like protein 4 (Sall4) of Mus musculus (Mouse).